Consider the following 252-residue polypeptide: Proteasome subunit alpha 1 (252 aa).

At methionine 1 the chain carries N-acetylmethionine; alternate.

The protein belongs to the peptidase T1A family. As to quaternary structure, the 20S proteasome core is composed of 14 alpha and 14 beta subunits that assemble into four stacked heptameric rings, resulting in a barrel-shaped structure. The two inner rings, each composed of seven catalytic beta subunits, are sandwiched by two outer rings, each composed of seven alpha subunits. H.volcanii produces at least 2 types of 20S proteasomes: an alpha1-beta proteasome and a proteasome containing all three subunits (alpha1, alpha2, and beta) that appears to be asymmetrical with homo-oligomeric alpha1 and alpha2 rings positioned on separate ends. The catalytic chamber with the active sites is on the inside of the barrel. Has probably a gated structure, the ends of the cylinder being occluded by the N-termini of the alpha-subunits. Is likely capped at one or both ends by the proteasome regulatory ATPase, PAN. Post-translationally, acetylated. The acetylated form at Met-1 was shown to be in 100-fold excess of the unacetylated form with the initiator methionine removed in whole cells and purified 20S proteasomes.

The protein localises to the cytoplasm. With respect to regulation, the formation of the proteasomal ATPase PAN-20S proteasome complex, via the docking of the C-termini of PAN into the intersubunit pockets in the alpha-rings, triggers opening of the gate for substrate entry. Interconversion between the open-gate and close-gate conformations leads to a dynamic regulation of the 20S proteasome proteolysis activity. In vitro, the chymotrypsin-like activity of the alpha1-beta proteasome is potently inhibited by carbobenzoxyl-leucinyl-leucinyl-leucinal-H (MG132) and significantly by N-acetyl-leucinyl-leucinyl-norleucinal-H (calpain inhibitor I). Component of the proteasome core, a large protease complex with broad specificity involved in protein degradation. The H.volcanii alpha1-beta proteasome is able to cleave oligopeptides after Phe, Tyr and Trp, poorly after Glu but not after Arg. Thus, displays chymotrypsin-like activity, low caspase-like activity but no trypsin-like activity. This Haloferax volcanii (strain ATCC 29605 / DSM 3757 / JCM 8879 / NBRC 14742 / NCIMB 2012 / VKM B-1768 / DS2) (Halobacterium volcanii) protein is Proteasome subunit alpha 1.